We begin with the raw amino-acid sequence, 290 residues long: Chloride intracellular channel exc-4 (290 aa).

The helical transmembrane segment at 37 to 57 threads the bilayer; sequence LFCQEFWMELYALYEIGVARV.

This sequence belongs to the chloride channel CLIC family. In terms of assembly, monomer. As to expression, expressed in the secretory system, hypodermis, vulva, pharyngeal muscle, rectal gland, tubular rectal epithelium cells, and tubular neuronal support cells in the head and tail.

It is found in the cytoplasm. The protein localises to the membrane. May insert into membranes and form chloride ion channels. Involved in the formation of the excretory canal. Required to prevent cystic lumenal expansions in the excretory cell. Not required for formation of the initial tube, but is required for regulating the size of the tube lumen as it grows. The polypeptide is Chloride intracellular channel exc-4 (exc-4) (Caenorhabditis elegans).